The following is a 98-amino-acid chain: Large ribosomal subunit protein uL23 (98 aa).

This sequence belongs to the universal ribosomal protein uL23 family. Part of the 50S ribosomal subunit. Contacts protein L29, and trigger factor when it is bound to the ribosome.

In terms of biological role, one of the early assembly proteins it binds 23S rRNA. One of the proteins that surrounds the polypeptide exit tunnel on the outside of the ribosome. Forms the main docking site for trigger factor binding to the ribosome. This is Large ribosomal subunit protein uL23 from Alcanivorax borkumensis (strain ATCC 700651 / DSM 11573 / NCIMB 13689 / SK2).